A 186-amino-acid chain; its full sequence is MVSFSYKGNLIEIIEGDITDVNCEAIVNAANPSLMGGGGVDGAIHLKGGKTIDLECAELRRTKWPKGLPPGEADITSGGKLKAKYVIHTVGPIYRGQEEDAETLYSSYYRSLEIAKIHGIKCIAFPAISTGIYGYPFEEASVIALKAVTDFLSNKEGYIIKFVLYGQARYQTFVSLASDFLMAYNP.

Positions 1-181 (MVSFSYKGNL…TFVSLASDFL (181 aa)) constitute a Macro domain.

The protein belongs to the MacroD-type family.

This is an uncharacterized protein from Thermoplasma volcanium (strain ATCC 51530 / DSM 4299 / JCM 9571 / NBRC 15438 / GSS1).